A 204-amino-acid polypeptide reads, in one-letter code: MDAQTKIIRASHMIDMNDIIREGNPTLRAVAEDVTLPLSDEDIILGEKMMQFLRNSQDPVIAEKMGLRGGVGLAAPQLDISKRIIAVLVPNPEDAKGNPPKEAYSLQEIMYNPKVVAHSVQEAALGNGEGCLSVDRDVPGYVVRHARVTIEYFNKEGEKKRIKLRGYDSIVVQHEIDHTNGIMFYDRINKDNPFTIKDGLLIIE.

Fe cation-binding residues include cysteine 131 and histidine 174. Glutamate 175 is a catalytic residue. Fe cation is bound at residue histidine 178.

The protein belongs to the polypeptide deformylase family. Fe(2+) is required as a cofactor.

It catalyses the reaction N-terminal N-formyl-L-methionyl-[peptide] + H2O = N-terminal L-methionyl-[peptide] + formate. Functionally, removes the formyl group from the N-terminal Met of newly synthesized proteins. Requires at least a dipeptide for an efficient rate of reaction. N-terminal L-methionine is a prerequisite for activity but the enzyme has broad specificity at other positions. The protein is Peptide deformylase of Streptococcus thermophilus (strain CNRZ 1066).